The sequence spans 117 residues: Holo-[acyl-carrier-protein] synthase (117 aa).

Residues Asp-8 and Glu-59 each coordinate Mg(2+).

The protein belongs to the P-Pant transferase superfamily. AcpS family. Mg(2+) serves as cofactor.

The protein resides in the cytoplasm. The enzyme catalyses apo-[ACP] + CoA = holo-[ACP] + adenosine 3',5'-bisphosphate + H(+). Transfers the 4'-phosphopantetheine moiety from coenzyme A to a Ser of acyl-carrier-protein. In Staphylococcus carnosus (strain TM300), this protein is Holo-[acyl-carrier-protein] synthase.